Consider the following 247-residue polypeptide: MHIMVTNDDGIQAPGIQALASALRVLGEVTVVAPDRERSAVGHALTLNSPLRVFELRDGFYAVDGTPTDCVNMGIHSLLPFRPDLIVSGINHGANLGDDVTYSGTVAAAIEATLMGIPAIAVSLATQERSGHFPEAAQIAVRVARQVLSNGLPEDTFLNVNVPDCPAEEIRPPLVTRQGKRSFVGNVIDKTDPRGRKYYWIGSGEADFNDYEGTDFHAINRKHVSITPLHLDLTNYASMKVITTWVF.

A divalent metal cation is bound by residues D8, D9, S39, and N91.

The protein belongs to the SurE nucleotidase family. Requires a divalent metal cation as cofactor.

Its subcellular location is the cytoplasm. It catalyses the reaction a ribonucleoside 5'-phosphate + H2O = a ribonucleoside + phosphate. In terms of biological role, nucleotidase that shows phosphatase activity on nucleoside 5'-monophosphates. The protein is 5'-nucleotidase SurE of Pelobacter propionicus (strain DSM 2379 / NBRC 103807 / OttBd1).